We begin with the raw amino-acid sequence, 944 residues long: Protein unc-45 homolog A (944 aa).

Residues 1–25 (MTVSGPETPEPRPSDPGASSAEQLR) are disordered. 3 TPR repeats span residues 21-54 (AEQL…GATP), 58-91 (AILH…DGGD), and 92-125 (VKAL…EPKN). Lysine 70 carries the N6-acetyllysine modification. Residue lysine 483 is modified to N6-acetyllysine.

As to quaternary structure, interacts with PGR isoforms A and B as well as with NR3C1 in the absence of ligand, and with HSP90AB1. Binding to HSP90AB1 involves 2 UNC45A monomers per HSP90AB1 dimer. Detected in spleen, bone marrow, lung and ovary, and at lower levels in testis, kidney, heart and brain (at protein level). Ubiquitous. Detected in uterus, large intestine, kidney, spleen, lung, brain, liver and ovary.

It is found in the cytoplasm. The protein localises to the perinuclear region. The protein resides in the nucleus. May act as co-chaperone for HSP90 (Potential). Prevents the stimulation of HSP90AB1 ATPase activity by AHSA1. Positive factor in promoting PGR function in the cell. May be necessary for proper folding of myosin (Potential). Necessary for normal cell proliferation. Necessary for normal myotube formation and myosin accumulation during muscle cell development. May play a role in erythropoiesis in stroma cells in the spleen. The protein is Protein unc-45 homolog A (Unc45a) of Mus musculus (Mouse).